Reading from the N-terminus, the 301-residue chain is Glutathione transport system permease protein GsiD (301 aa).

6 consecutive transmembrane segments (helical) span residues 37–57 (VAVA…WAQY), 103–123 (LAAG…LGLL), 141–161 (VLFA…MGSG), 162–182 (MANV…RLVR), 220–240 (IVVF…SLSF), and 264–284 (VIAP…VLAF). Positions 99–288 (TRISLAAGIF…LTVLAFNLLG (190 aa)) constitute an ABC transmembrane type-1 domain.

It belongs to the binding-protein-dependent transport system permease family. In terms of assembly, the complex is composed of two ATP-binding proteins (GsiA), two transmembrane proteins (GsiC and GsiD) and a solute-binding protein (GsiB).

Its subcellular location is the cell inner membrane. Its function is as follows. Part of the ABC transporter complex GsiABCD involved in glutathione import. Probably responsible for the translocation of the substrate across the membrane. In Pectobacterium atrosepticum (strain SCRI 1043 / ATCC BAA-672) (Erwinia carotovora subsp. atroseptica), this protein is Glutathione transport system permease protein GsiD.